A 258-amino-acid chain; its full sequence is Large ribosomal subunit protein bL19m (258 aa).

The disordered stretch occupies residues 235–258 (SKGLTGGVGGGGGKQKGQESKKKN). Gly residues predominate over residues 238-249 (LTGGVGGGGGKQ).

It belongs to the bacterial ribosomal protein bL19 family. In terms of assembly, component of the mitochondrial large ribosomal subunit (mt-LSU). Mature N.crassa 74S mitochondrial ribosomes consist of a small (37S) and a large (54S) subunit. The 37S small subunit contains a 16S ribosomal RNA (16S mt-rRNA) and 32 different proteins. The 54S large subunit contains a 23S rRNA (23S mt-rRNA) and 42 different proteins.

It localises to the mitochondrion. Component of the mitochondrial ribosome (mitoribosome), a dedicated translation machinery responsible for the synthesis of mitochondrial genome-encoded proteins, including at least some of the essential transmembrane subunits of the mitochondrial respiratory chain. The mitoribosomes are attached to the mitochondrial inner membrane and translation products are cotranslationally integrated into the membrane. This chain is Large ribosomal subunit protein bL19m (img1), found in Neurospora crassa (strain ATCC 24698 / 74-OR23-1A / CBS 708.71 / DSM 1257 / FGSC 987).